Here is a 334-residue protein sequence, read N- to C-terminus: Glutaminase (334 aa).

Residues S76, N126, E170, N177, Y201, Y253, and V271 each contribute to the substrate site.

It belongs to the glutaminase family. In terms of assembly, homotetramer.

It carries out the reaction L-glutamine + H2O = L-glutamate + NH4(+). This chain is Glutaminase, found in Nostoc sp. (strain PCC 7120 / SAG 25.82 / UTEX 2576).